Reading from the N-terminus, the 347-residue chain is Very-long-chain 3-oxoacyl-CoA reductase (347 aa).

Residues 22–42 (LLWSIFGFGVLKATTLILRIM) form a helical membrane-spanning segment. NADP(+) contacts are provided by valine 68, aspartate 122, asparagine 149, tyrosine 223, lysine 227, valine 256, and serine 258. Tyrosine 223 functions as the Proton donor in the catalytic mechanism. The active-site Lowers pKa of active site Tyr is the lysine 227.

It belongs to the short-chain dehydrogenases/reductases (SDR) family.

It is found in the endoplasmic reticulum membrane. It catalyses the reaction a very-long-chain (3R)-3-hydroxyacyl-CoA + NADP(+) = a very-long-chain 3-oxoacyl-CoA + NADPH + H(+). It functions in the pathway lipid metabolism; fatty acid biosynthesis. Component of the microsomal membrane bound fatty acid elongation system, which produces the 26-carbon very long-chain fatty acids (VLCFA) from palmitate. Catalyzes the reduction of the 3-ketoacyl-CoA intermediate that is formed in each cycle of fatty acid elongation. VLCFAs serve as precursors for ceramide and sphingolipids. The protein is Very-long-chain 3-oxoacyl-CoA reductase of Vanderwaltozyma polyspora (strain ATCC 22028 / DSM 70294 / BCRC 21397 / CBS 2163 / NBRC 10782 / NRRL Y-8283 / UCD 57-17) (Kluyveromyces polysporus).